Consider the following 136-residue polypeptide: Putative LysR family substrate binding domain-containing protein YagP (136 aa).

It belongs to the LysR transcriptional regulatory family.

The protein is Putative LysR family substrate binding domain-containing protein YagP (yagP) of Escherichia coli (strain K12).